A 418-amino-acid chain; its full sequence is Serine hydroxymethyltransferase (418 aa).

Residues leucine 121 and 125 to 127 contribute to the (6S)-5,6,7,8-tetrahydrofolate site; that span reads GHL. An N6-(pyridoxal phosphate)lysine modification is found at lysine 230. Residues glutamate 246 and 355–357 each bind (6S)-5,6,7,8-tetrahydrofolate; that span reads SPF.

It belongs to the SHMT family. As to quaternary structure, homodimer. It depends on pyridoxal 5'-phosphate as a cofactor.

The protein resides in the cytoplasm. It catalyses the reaction (6R)-5,10-methylene-5,6,7,8-tetrahydrofolate + glycine + H2O = (6S)-5,6,7,8-tetrahydrofolate + L-serine. Its pathway is one-carbon metabolism; tetrahydrofolate interconversion. It participates in amino-acid biosynthesis; glycine biosynthesis; glycine from L-serine: step 1/1. Catalyzes the reversible interconversion of serine and glycine with tetrahydrofolate (THF) serving as the one-carbon carrier. This reaction serves as the major source of one-carbon groups required for the biosynthesis of purines, thymidylate, methionine, and other important biomolecules. Also exhibits THF-independent aldolase activity toward beta-hydroxyamino acids, producing glycine and aldehydes, via a retro-aldol mechanism. The polypeptide is Serine hydroxymethyltransferase (Streptococcus pneumoniae serotype 4 (strain ATCC BAA-334 / TIGR4)).